The sequence spans 418 residues: Tyrosine--tRNA ligase (418 aa).

Y34 contacts L-tyrosine. Positions 39 to 48 (PTADSLHLGH) match the 'HIGH' region motif. Positions 169 and 173 each coordinate L-tyrosine. The 'KMSKS' region signature appears at 229-233 (KFGKS). Residue K232 participates in ATP binding. One can recognise an S4 RNA-binding domain in the interval 352-418 (LNIVDMLVTA…GKKKYAVLTY (67 aa)).

The protein belongs to the class-I aminoacyl-tRNA synthetase family. TyrS type 1 subfamily. As to quaternary structure, homodimer.

The protein resides in the cytoplasm. It catalyses the reaction tRNA(Tyr) + L-tyrosine + ATP = L-tyrosyl-tRNA(Tyr) + AMP + diphosphate + H(+). In terms of biological role, catalyzes the attachment of tyrosine to tRNA(Tyr) in a two-step reaction: tyrosine is first activated by ATP to form Tyr-AMP and then transferred to the acceptor end of tRNA(Tyr). The sequence is that of Tyrosine--tRNA ligase from Streptococcus equi subsp. equi (strain 4047).